A 254-amino-acid polypeptide reads, in one-letter code: Phosphate import ATP-binding protein PstB (254 aa).

An ABC transporter domain is found at 9–249 (MSVKDLDLFY…PVDKRTEDYI (241 aa)). 41–48 (GPSGCGKS) is a binding site for ATP.

It belongs to the ABC transporter superfamily. Phosphate importer (TC 3.A.1.7) family. In terms of assembly, the complex is composed of two ATP-binding proteins (PstB), two transmembrane proteins (PstC and PstA) and a solute-binding protein (PstS).

It is found in the cell membrane. The enzyme catalyses phosphate(out) + ATP + H2O = ADP + 2 phosphate(in) + H(+). Its function is as follows. Part of the ABC transporter complex PstSACB involved in phosphate import. Responsible for energy coupling to the transport system. In Clostridioides difficile (strain 630) (Peptoclostridium difficile), this protein is Phosphate import ATP-binding protein PstB.